The sequence spans 438 residues: Chromosomal replication initiator protein DnaA (438 aa).

Positions 1-71 (MTELDSLWEA…VEIVYQRTGQ (71 aa)) are domain I, interacts with DnaA modulators. Residues 71-101 (QEIRPDYVLATDPTPLAQTPPRPQSTFKEET) form a domain II region. The segment at 81–100 (TDPTPLAQTPPRPQSTFKEE) is disordered. The interval 102–318 (PLNPEYTFQT…GALMRIRVFS (217 aa)) is domain III, AAA+ region. 4 residues coordinate ATP: G146, G148, K149, and T150. Positions 319 to 438 (ELHQQPITLK…LVKLKNDLQA (120 aa)) are domain IV, binds dsDNA.

It belongs to the DnaA family. Oligomerizes as a right-handed, spiral filament on DNA at oriC.

The protein resides in the cytoplasm. In terms of biological role, plays an essential role in the initiation and regulation of chromosomal replication. ATP-DnaA binds to the origin of replication (oriC) to initiate formation of the DNA replication initiation complex once per cell cycle. Binds the DnaA box (a 9 base pair repeat at the origin) and separates the double-stranded (ds)DNA. Forms a right-handed helical filament on oriC DNA; dsDNA binds to the exterior of the filament while single-stranded (ss)DNA is stabiized in the filament's interior. The ATP-DnaA-oriC complex binds and stabilizes one strand of the AT-rich DNA unwinding element (DUE), permitting loading of DNA polymerase. After initiation quickly degrades to an ADP-DnaA complex that is not apt for DNA replication. Binds acidic phospholipids. The sequence is that of Chromosomal replication initiator protein DnaA from Limosilactobacillus fermentum (strain NBRC 3956 / LMG 18251) (Lactobacillus fermentum).